The primary structure comprises 318 residues: 4-hydroxy-3-methylbut-2-enyl diphosphate reductase (318 aa).

Position 21 (cysteine 21) interacts with [4Fe-4S] cluster. Residues histidine 50 and histidine 83 each contribute to the (2E)-4-hydroxy-3-methylbut-2-enyl diphosphate site. Histidine 50 and histidine 83 together coordinate dimethylallyl diphosphate. The isopentenyl diphosphate site is built by histidine 50 and histidine 83. A [4Fe-4S] cluster-binding site is contributed by cysteine 105. Position 133 (histidine 133) interacts with (2E)-4-hydroxy-3-methylbut-2-enyl diphosphate. Residue histidine 133 participates in dimethylallyl diphosphate binding. Histidine 133 serves as a coordination point for isopentenyl diphosphate. Residue glutamate 135 is the Proton donor of the active site. A (2E)-4-hydroxy-3-methylbut-2-enyl diphosphate-binding site is contributed by threonine 176. Cysteine 206 lines the [4Fe-4S] cluster pocket. Residues serine 234, serine 235, asparagine 236, and serine 278 each coordinate (2E)-4-hydroxy-3-methylbut-2-enyl diphosphate. Dimethylallyl diphosphate-binding residues include serine 234, serine 235, asparagine 236, and serine 278. Isopentenyl diphosphate-binding residues include serine 234, serine 235, asparagine 236, and serine 278.

The protein belongs to the IspH family. Requires [4Fe-4S] cluster as cofactor.

It catalyses the reaction isopentenyl diphosphate + 2 oxidized [2Fe-2S]-[ferredoxin] + H2O = (2E)-4-hydroxy-3-methylbut-2-enyl diphosphate + 2 reduced [2Fe-2S]-[ferredoxin] + 2 H(+). It carries out the reaction dimethylallyl diphosphate + 2 oxidized [2Fe-2S]-[ferredoxin] + H2O = (2E)-4-hydroxy-3-methylbut-2-enyl diphosphate + 2 reduced [2Fe-2S]-[ferredoxin] + 2 H(+). It functions in the pathway isoprenoid biosynthesis; dimethylallyl diphosphate biosynthesis; dimethylallyl diphosphate from (2E)-4-hydroxy-3-methylbutenyl diphosphate: step 1/1. The protein operates within isoprenoid biosynthesis; isopentenyl diphosphate biosynthesis via DXP pathway; isopentenyl diphosphate from 1-deoxy-D-xylulose 5-phosphate: step 6/6. In terms of biological role, catalyzes the conversion of 1-hydroxy-2-methyl-2-(E)-butenyl 4-diphosphate (HMBPP) into a mixture of isopentenyl diphosphate (IPP) and dimethylallyl diphosphate (DMAPP). Acts in the terminal step of the DOXP/MEP pathway for isoprenoid precursor biosynthesis. The protein is 4-hydroxy-3-methylbut-2-enyl diphosphate reductase of Shewanella oneidensis (strain ATCC 700550 / JCM 31522 / CIP 106686 / LMG 19005 / NCIMB 14063 / MR-1).